The chain runs to 180 residues: Shikimate kinase (180 aa).

14-19 (GAGKSC) contacts ATP. Residue S18 participates in Mg(2+) binding. 3 residues coordinate substrate: D36, R60, and G82. R120 is a binding site for ATP. Residue R139 coordinates substrate.

This sequence belongs to the shikimate kinase family. In terms of assembly, monomer. Mg(2+) is required as a cofactor.

It is found in the cytoplasm. It carries out the reaction shikimate + ATP = 3-phosphoshikimate + ADP + H(+). The protein operates within metabolic intermediate biosynthesis; chorismate biosynthesis; chorismate from D-erythrose 4-phosphate and phosphoenolpyruvate: step 5/7. Catalyzes the specific phosphorylation of the 3-hydroxyl group of shikimic acid using ATP as a cosubstrate. The protein is Shikimate kinase of Xanthomonas axonopodis pv. citri (strain 306).